The chain runs to 377 residues: Glutamate 5-kinase (377 aa).

Lys-20 serves as a coordination point for ATP. Substrate contacts are provided by Ser-60, Asp-147, and Asn-159. 179–180 (TD) serves as a coordination point for ATP. The region spanning 285-363 (AGRLVIDAGA…DKVHQVLGEA (79 aa)) is the PUA domain.

It belongs to the glutamate 5-kinase family.

The protein resides in the cytoplasm. The catalysed reaction is L-glutamate + ATP = L-glutamyl 5-phosphate + ADP. The protein operates within amino-acid biosynthesis; L-proline biosynthesis; L-glutamate 5-semialdehyde from L-glutamate: step 1/2. Catalyzes the transfer of a phosphate group to glutamate to form L-glutamate 5-phosphate. The protein is Glutamate 5-kinase of Acinetobacter baylyi (strain ATCC 33305 / BD413 / ADP1).